A 184-amino-acid polypeptide reads, in one-letter code: UPF0149 protein PSPTO_5224 (184 aa).

It belongs to the UPF0149 family.

This chain is UPF0149 protein PSPTO_5224, found in Pseudomonas syringae pv. tomato (strain ATCC BAA-871 / DC3000).